We begin with the raw amino-acid sequence, 330 residues long: Serine/threonine-protein phosphatase PP1-alpha catalytic subunit (330 aa).

An N-acetylserine modification is found at S2. S2 and S22 each carry phosphoserine. The Mn(2+) site is built by D64, H66, D92, and N124. H125 functions as the Proton donor in the catalytic mechanism. Mn(2+) is bound by residues H173 and H248. K305 is subject to N6-acetyllysine. Y306 is modified (phosphotyrosine). The disordered stretch occupies residues 306–330 (YGQFSGLNPGGRPITPPRNSAKAKK). Residue T320 is modified to Phosphothreonine. S325 bears the Phosphoserine mark.

The protein belongs to the PPP phosphatase family. PP-1 subfamily. In terms of assembly, PP1 comprises a catalytic subunit, PPP1CA, PPP1CB or PPP1CC, which is folded into its native form by inhibitor 2 and glycogen synthetase kinase 3, and then complexed to one or several targeting or regulatory subunits. PPP1R12A, PPP1R12B and PPP1R12C mediate binding to myosin. PPP1R3A (in skeletal muscle), PPP1R3B (in liver), PPP1R3C, PPP1R3D and PPP1R3F (in brain) mediate binding to glycogen. Interacts with PPP1R15A and PPP1R15B; the interactions mediate binding to EIF2S1. Part of a complex containing PPP1R15B, PP1 and NCK1/2. Interacts with PPP1R9A, PPP1R9B and PPP1R7. Interacts with YLPM1. Forms a complex with ILF2, ILF3, YLPM1, KHDRBS1, RBMX and NCOA5. Interacts with NOM1 and PPP1R8. Interacts with PPP1R16B. Interacts with RPSA only in the presence of PPP1R16B. Component of the PNUTS-PP1 phosphatase complex, composed of PPP1R10/PNUTS, TOX4, WDR82, and PPP1CA or PPP1CB or PPP1CC. Interacts with PPP1R10/PNUTS and PPP1R8. Interacts with WDR82 in the presence of PPP1R10/PNUTS. Interacts with PPP1R39. transition from mitosis into interphase. Interacts with TRIM28; the interaction dephosphorylates TRIM28 on 'Ser-824' and forms a complex at the p21 promoter site. Interacts with NEK2. Interacts with PHACTR4; which acts as an activator of PP1 activity. Interacts with FER; this promotes phosphorylation at Thr-320. Interacts with BTBD10. Interacts with KCTD20. Interacts with FOXP3. Interacts with CENPA. Interacts with ATG16L1. Found in a complex with PPP1CA, PPP1CC, SHC1 and PEAK1. Interacts with tensin TNS1. Interacts with SAXO4, PPP1R21, PPP1R26, PPP1R27, PPP1R35, PPP1R36, PPP1R37, SH3RF2, ELFN1 and ELFN2. Interacts with TPRN; the interaction results in inhibition of PPC1A phosphatase activity. Interacts with SKA1 (via C-terminus); the interaction is direct and required for the recruitment of PP1 to the kinetochore. Interacts with the KNL1 complex subunit KNL1; the interaction is direct and mutually exclusive with KNL1 binding to microtubules. Component of the SHOC2-MRAS-PP1c (SMP) complex consisting of SHOC2, GTP-bound M-Ras/MRAS and the catalytic subunit of protein phosphatase 1 (either PPP1CA, PPP1CB or PPP1CC). SHOC2 and PP1c preferably bind M-Ras/MRAS, but they also bind K-Ras/KRAS, N-Ras/NRAS and H-Ras/HRAS; these interactions are GTP-dependent and both SHOC2 and PP1c are required to form a stable complex. Interacts with SHOC2 in the absence of Ras GTPases. Mn(2+) is required as a cofactor. Post-translationally, phosphorylated. Dephosphorylated at Thr-320 in the presence of ionizing radiation.

It localises to the cytoplasm. The protein localises to the nucleus. It is found in the nucleoplasm. The protein resides in the nucleolus. The enzyme catalyses O-phospho-L-seryl-[protein] + H2O = L-seryl-[protein] + phosphate. It carries out the reaction O-phospho-L-threonyl-[protein] + H2O = L-threonyl-[protein] + phosphate. Its function is as follows. Protein phosphatase that associates with over 200 regulatory proteins to form highly specific holoenzymes which dephosphorylate hundreds of biological targets. Protein phosphatase 1 (PP1) is essential for cell division, transcription elongation, and participates in the regulation of glycogen metabolism, muscle contractility and protein synthesis. Involved in regulation of ionic conductances and long-term synaptic plasticity. May play an important role in dephosphorylating substrates such as the postsynaptic density-associated Ca(2+)/calmodulin dependent protein kinase II. Catalytic component of the PNUTS-PP1 protein phosphatase complex, a protein phosphatase 1 (PP1) complex that promotes RNA polymerase II transcription pause-release, allowing transcription elongation: the PNUTS-PP1 complex mediates the release of RNA polymerase II from promoter-proximal region of genes by catalyzing dephosphorylation of proteins involved in transcription, such as AFF4, CDK9, MEPCE, INTS12, NCBP1, POLR2M/GDOWN1 and SUPT6H. The PNUTS-PP1 complex also regulates transcription termination by mediating dephosphorylation of SUPT5H in termination zones downstream of poly(A) sites, thereby promoting deceleration of RNA polymerase II transcription. PNUTS-PP1 complex is also involved in the response to replication stress by mediating dephosphorylation of POLR2A at 'Ser-5' of the CTD, promoting RNA polymerase II degradation. PNUTS-PP1 also plays a role in the control of chromatin structure and cell cycle progression during the transition from mitosis into interphase. Regulates NEK2 function in terms of kinase activity and centrosome number and splitting, both in the presence and absence of radiation-induced DNA damage. Regulator of neural tube and optic fissure closure, and enteric neural crest cell (ENCCs) migration during development. In balance with CSNK1D and CSNK1E, determines the circadian period length, through the regulation of the speed and rhythmicity of PER1 and PER2 phosphorylation. May dephosphorylate CSNK1D and CSNK1E. Dephosphorylates the 'Ser-418' residue of FOXP3 in regulatory T-cells (Treg) from patients with rheumatoid arthritis, thereby inactivating FOXP3 and rendering Treg cells functionally defective. Dephosphorylates CENPA. Dephosphorylates the 'Ser-139' residue of ATG16L1 causing dissociation of ATG12-ATG5-ATG16L1 complex, thereby inhibiting autophagy. Together with PPP1CC (PP1-gamma subunit), dephosphorylates IFIH1/MDA5 and RIG-I leading to their activation and a functional innate immune response. Core component of the SHOC2-MRAS-PP1c (SMP) holophosphatase complex that regulates the MAPK pathway activation. The SMP complex specifically dephosphorylates the inhibitory phosphorylation at 'Ser-259' of RAF1 kinase, 'Ser-365' of BRAF kinase and 'Ser-214' of ARAF kinase, stimulating their kinase activities. The SMP complex enhances the dephosphorylation activity and substrate specificity of PP1c. The sequence is that of Serine/threonine-protein phosphatase PP1-alpha catalytic subunit (PPP1CA) from Canis lupus familiaris (Dog).